The primary structure comprises 349 residues: Neutral protease 2 homolog ACLA_052720 (349 aa).

Residues 1-19 (MQLTVLASAILALAQGALA) form the signal peptide. A propeptide spanning residues 20-172 (IPAKAPALDV…PAAINLLDRR (153 aa)) is cleaved from the precursor. Cystine bridges form between C178-C250 and C257-C275. Residue H300 participates in Zn(2+) binding. The active site involves E301. 2 residues coordinate Zn(2+): H304 and D315.

This sequence belongs to the peptidase M35 family. Requires Zn(2+) as cofactor.

Its subcellular location is the secreted. The enzyme catalyses Preferential cleavage of bonds with hydrophobic residues in P1'. Also 3-Asn-|-Gln-4 and 8-Gly-|-Ser-9 bonds in insulin B chain.. Functionally, secreted metalloproteinase that allows assimilation of proteinaceous substrates. Shows high activities on basic nuclear substrates such as histone and protamine. In Aspergillus clavatus (strain ATCC 1007 / CBS 513.65 / DSM 816 / NCTC 3887 / NRRL 1 / QM 1276 / 107), this protein is Neutral protease 2 homolog ACLA_052720.